The following is a 329-amino-acid chain: Malate dehydrogenase 2 (329 aa).

12–18 (GAAGQIA) serves as a coordination point for NAD(+). Positions 93 and 99 each coordinate substrate. NAD(+)-binding positions include asparagine 106, glutamine 113, and 130–132 (VGN). The substrate site is built by asparagine 132 and arginine 163. Catalysis depends on histidine 188, which acts as the Proton acceptor.

The protein belongs to the LDH/MDH superfamily. MDH type 2 family.

The enzyme catalyses (S)-malate + NAD(+) = oxaloacetate + NADH + H(+). Its function is as follows. Catalyzes the reversible oxidation of malate to oxaloacetate. This Burkholderia thailandensis (strain ATCC 700388 / DSM 13276 / CCUG 48851 / CIP 106301 / E264) protein is Malate dehydrogenase 2.